A 226-amino-acid polypeptide reads, in one-letter code: Leucyl/phenylalanyl-tRNA--protein transferase (226 aa).

The protein belongs to the L/F-transferase family.

The protein resides in the cytoplasm. It carries out the reaction N-terminal L-lysyl-[protein] + L-leucyl-tRNA(Leu) = N-terminal L-leucyl-L-lysyl-[protein] + tRNA(Leu) + H(+). The catalysed reaction is N-terminal L-arginyl-[protein] + L-leucyl-tRNA(Leu) = N-terminal L-leucyl-L-arginyl-[protein] + tRNA(Leu) + H(+). The enzyme catalyses L-phenylalanyl-tRNA(Phe) + an N-terminal L-alpha-aminoacyl-[protein] = an N-terminal L-phenylalanyl-L-alpha-aminoacyl-[protein] + tRNA(Phe). Its function is as follows. Functions in the N-end rule pathway of protein degradation where it conjugates Leu, Phe and, less efficiently, Met from aminoacyl-tRNAs to the N-termini of proteins containing an N-terminal arginine or lysine. The chain is Leucyl/phenylalanyl-tRNA--protein transferase from Bradyrhizobium diazoefficiens (strain JCM 10833 / BCRC 13528 / IAM 13628 / NBRC 14792 / USDA 110).